The following is a 599-amino-acid chain: MTTPAPLTGLLPLNPEQLARLQAATTDLTPEQLAWVSGYFWGVLNPRSGAVAVTPAPEGKMPGVTLISASQTGNARRVAEALRDDLLAANLNVTLVNAGDYKFKQIASEKLLVIVTSTQGEGEPPEEAVALHKFLFSKKAPKLENTAFAVFSLGDTSYEFFCQSGKDFDSKLAELGGERLLDRVDADVEYQAAASEWRARVVDVLKSRAPVAAPSQSVATGSVNDIHTSPYTKDAPLAATLSVNQKITGRNSEKDVRHIEIDLGDSGLRYQPGDALGVWYQNDPALVKELVELLWLKGDEPVTVDGKTLPLAEALEWHFELTVNTANIVENYATLTRSESLLPLVGDKAQLQHYAATTPIVDMVRFSLAQLDAQALIDLLRPLTPRLYSIASAQAEVESEVHITVGVVCYDIEGRARAGGASSFLADRVEEEGEVRVFIEHNDNFRLPANPETPVIMIGPGTGIAPFRAFMQQRAAEGVEGKNWLFFGNPHFTEDFLYQVEWQRYVKEGGLSRIDLAWSRDQKEKIYVQDKLREQGAELWRWINDGAHIYVCGDARRMAADVEKALLEVIAEFGGMDLESADEYLSELRVERRYQRDVY.

The region spanning 64 to 202 (VTLISASQTG…AASEWRARVV (139 aa)) is the Flavodoxin-like domain. FMN is bound by residues 70-75 (SQTGNA), 117-120 (STQG), and 153-162 (LGDTSYEFFC). An FAD-binding FR-type domain is found at 234-448 (DAPLAATLSV…IEHNDNFRLP (215 aa)). Residues threonine 322, alanine 356, 386–389 (RLYS), 404–406 (TVG), tyrosine 410, and 419–422 (GGAS) contribute to the FAD site. NADP(+)-binding positions include 519–520 (SR), 525–529 (KIYVQ), and aspartate 561. Residue tyrosine 599 coordinates FAD.

The protein belongs to the NADPH-dependent sulphite reductase flavoprotein subunit CysJ family. In the N-terminal section; belongs to the flavodoxin family. This sequence in the C-terminal section; belongs to the flavoprotein pyridine nucleotide cytochrome reductase family. As to quaternary structure, alpha(8)-beta(8). The alpha component is a flavoprotein, the beta component is a hemoprotein. FAD serves as cofactor. FMN is required as a cofactor.

The catalysed reaction is hydrogen sulfide + 3 NADP(+) + 3 H2O = sulfite + 3 NADPH + 4 H(+). It functions in the pathway sulfur metabolism; hydrogen sulfide biosynthesis; hydrogen sulfide from sulfite (NADPH route): step 1/1. Component of the sulfite reductase complex that catalyzes the 6-electron reduction of sulfite to sulfide. This is one of several activities required for the biosynthesis of L-cysteine from sulfate. The flavoprotein component catalyzes the electron flow from NADPH -&gt; FAD -&gt; FMN to the hemoprotein component. The protein is Sulfite reductase [NADPH] flavoprotein alpha-component of Salmonella paratyphi B (strain ATCC BAA-1250 / SPB7).